The following is a 204-amino-acid chain: IMPACT family member YigZ (204 aa).

Belongs to the IMPACT family. Monomer.

The sequence is that of IMPACT family member YigZ (yigZ) from Escherichia coli (strain K12).